A 216-amino-acid polypeptide reads, in one-letter code: Urease accessory protein UreG (216 aa).

Residue 25 to 32 (GPVGSGKT) participates in GTP binding.

The protein belongs to the SIMIBI class G3E GTPase family. UreG subfamily. As to quaternary structure, homodimer. UreD, UreF and UreG form a complex that acts as a GTP-hydrolysis-dependent molecular chaperone, activating the urease apoprotein by helping to assemble the nickel containing metallocenter of UreC. The UreE protein probably delivers the nickel.

It is found in the cytoplasm. Functionally, facilitates the functional incorporation of the urease nickel metallocenter. This process requires GTP hydrolysis, probably effectuated by UreG. The protein is Urease accessory protein UreG of Burkholderia pseudomallei (strain 1710b).